Reading from the N-terminus, the 211-residue chain is MADS-box protein AGL72 (211 aa).

An MADS-box domain is found at M1–D61. The region spanning V88 to G187 is the K-box domain.

The protein resides in the nucleus. Its function is as follows. MADS-box transcription factor that acts with AGL42 and AGL71 in the control of flowering time. Promotes flowering at the shoot apical and axillary meristems. Seems to act through a gibberellin-dependent pathway. Interacts genetically with SOC1 and its expression is directly regulated by SOC1. The polypeptide is MADS-box protein AGL72 (AGL72) (Arabidopsis thaliana (Mouse-ear cress)).